We begin with the raw amino-acid sequence, 430 residues long: Glutamate-1-semialdehyde 2,1-aminomutase (430 aa).

N6-(pyridoxal phosphate)lysine is present on lysine 268.

It belongs to the class-III pyridoxal-phosphate-dependent aminotransferase family. HemL subfamily. The cofactor is pyridoxal 5'-phosphate.

It is found in the cytoplasm. It catalyses the reaction (S)-4-amino-5-oxopentanoate = 5-aminolevulinate. The protein operates within porphyrin-containing compound metabolism; protoporphyrin-IX biosynthesis; 5-aminolevulinate from L-glutamyl-tRNA(Glu): step 2/2. This is Glutamate-1-semialdehyde 2,1-aminomutase from Methanopyrus kandleri (strain AV19 / DSM 6324 / JCM 9639 / NBRC 100938).